The chain runs to 520 residues: Sodium-dependent dicarboxylate transporter SdcS (520 aa).

Transmembrane regions (helical) follow at residues 30–50 (AGQL…LLFF), 55–75 (LPWK…WWIT), 77–97 (AIPI…GHIL), 104–124 (SEYG…AIAM), 160–180 (SMFV…LAII), 207–227 (IGYA…PLII), 242–262 (FAKW…ITWL), 298–318 (KVVQ…EFLL), 323–343 (VTSS…LFVI), 362–382 (ELPW…KGIS), 399–419 (GVSP…LTEV), 428–448 (MILP…LLLM), 452–472 (AMAA…AIIF), and 491–511 (LISA…VLGI).

The protein belongs to the SLC13A/DASS transporter (TC 2.A.47) family. NADC subfamily.

The protein resides in the cell membrane. Functionally, mediates the transport of the dicarboxylates fumarate, malate, and succinate across the cytoplasmic membrane via a Na(+)-electrochemical gradient. The polypeptide is Sodium-dependent dicarboxylate transporter SdcS (sdcS) (Staphylococcus aureus (strain MSSA476)).